The sequence spans 214 residues: Intermembrane phospholipid transport system binding protein MlaC (214 aa).

The first 28 residues, 1-28 (MNLIQLKKWFTILTFVLTAFLVTRTAIA), serve as a signal peptide directing secretion.

The protein belongs to the MlaC/ttg2D family.

The protein resides in the periplasm. Its function is as follows. Involved in a phospholipid transport pathway that maintains lipid asymmetry in the outer membrane by retrograde trafficking of phospholipids from the outer membrane to the inner membrane. May transfer phospholipid across the periplasmic space and deliver it to the MlaFEDB complex at the inner membrane. The chain is Intermembrane phospholipid transport system binding protein MlaC from Haemophilus influenzae (strain ATCC 51907 / DSM 11121 / KW20 / Rd).